A 162-amino-acid polypeptide reads, in one-letter code: Nucleotide-binding protein Adeh_0094 (162 aa).

It belongs to the YajQ family.

In terms of biological role, nucleotide-binding protein. The protein is Nucleotide-binding protein Adeh_0094 of Anaeromyxobacter dehalogenans (strain 2CP-C).